Reading from the N-terminus, the 97-residue chain is METRKYEITYIIRPDIEESAKSELVARFDKILADNGATVVDSADWDTRRFAYQIGKYTEGTYHIVNVTADSDASLNEFDRLAKFSDDILRHMIVKRG.

This sequence belongs to the bacterial ribosomal protein bS6 family.

Binds together with bS18 to 16S ribosomal RNA. This is Small ribosomal subunit protein bS6 from Limosilactobacillus fermentum (strain NBRC 3956 / LMG 18251) (Lactobacillus fermentum).